The chain runs to 385 residues: uncharacterized protein (385 aa).

It belongs to the phage portal family. HK97 subfamily.

This is an uncharacterized protein from Rickettsia felis (strain ATCC VR-1525 / URRWXCal2) (Rickettsia azadi).